The following is a 158-amino-acid chain: Large ribosomal subunit protein uL30 (158 aa).

The protein belongs to the universal ribosomal protein uL30 family. In terms of assembly, part of the 50S ribosomal subunit.

The protein is Large ribosomal subunit protein uL30 of Saccharolobus solfataricus (strain ATCC 35092 / DSM 1617 / JCM 11322 / P2) (Sulfolobus solfataricus).